A 579-amino-acid polypeptide reads, in one-letter code: Potassium-transporting ATPase potassium-binding subunit (579 aa).

Transmembrane regions (helical) follow at residues 1-21, 64-84, 135-155, 178-198, 265-285, 293-313, 398-418, 435-455, 503-523, and 549-569; these read MISN…ACVV, HYAL…YGLQ, GLTV…IGLI, IYIL…QGVV, FLEL…FGLM, WAIL…AVSA, GLYG…LMVG, MAAL…AIAV, WLGI…LAIA, and LLIG…LALG.

This sequence belongs to the KdpA family. As to quaternary structure, the system is composed of three essential subunits: KdpA, KdpB and KdpC.

It localises to the cell membrane. In terms of biological role, part of the high-affinity ATP-driven potassium transport (or Kdp) system, which catalyzes the hydrolysis of ATP coupled with the electrogenic transport of potassium into the cytoplasm. This subunit binds the extracellular potassium ions and delivers the ions to the membrane domain of KdpB through an intramembrane tunnel. In Herpetosiphon aurantiacus (strain ATCC 23779 / DSM 785 / 114-95), this protein is Potassium-transporting ATPase potassium-binding subunit.